A 339-amino-acid chain; its full sequence is Scoulerine-9-O-methyltransferase 3 (339 aa).

Methionine 161 contributes to the S-adenosyl-L-methionine binding site. Aspartate 164 contacts substrate. S-adenosyl-L-methionine-binding positions include threonine 165, glycine 191, aspartate 214, 228 to 229 (DV), and lysine 242. Residue 243–247 (SILHE) participates in substrate binding. Histidine 246 acts as the Proton acceptor in catalysis.

It belongs to the class I-like SAM-binding methyltransferase superfamily. Cation-independent O-methyltransferase family. COMT subfamily. Homodimer. Forms heterodimer with SOMT2. The heterodimer SOMT2-SOMT3 possesses 3-O-acetyl-4'-O-demethylpapaveroxine 4'-O-methyltransferase activity, where SOMT2 is the catalytic subunit. Highly expressed in capsules. Expressed is stems. Expressed at low levels in roots.

The enzyme catalyses (S)-scoulerine + S-adenosyl-L-methionine = (S)-tetrahydrocolumbamine + S-adenosyl-L-homocysteine + H(+). Its pathway is alkaloid biosynthesis. In terms of biological role, methyltransferase involved in the biosynthesis of the benzylisoquinoline alkaloid noscapine. Catalyzes the conversion of (S)-scoulerine to (S)-tetrahydrocolumbamine. The polypeptide is Scoulerine-9-O-methyltransferase 3 (Papaver somniferum (Opium poppy)).